We begin with the raw amino-acid sequence, 199 residues long: Recombination protein RecR (199 aa).

A C4-type zinc finger spans residues 57 to 72 (CNLCNNFSEQEICPLC). Residues 80–175 (TLLCIVEMPS…QVSRIARGLP (96 aa)) enclose the Toprim domain.

Belongs to the RecR family.

May play a role in DNA repair. It seems to be involved in an RecBC-independent recombinational process of DNA repair. It may act with RecF and RecO. The sequence is that of Recombination protein RecR from Methylobacillus flagellatus (strain ATCC 51484 / DSM 6875 / VKM B-1610 / KT).